The following is a 259-amino-acid chain: MTISNGDVKSETCNNGSSEKKPFRIFVGYDPREDLAYQVCHHSITKRSSIPVEITPIIQSDLRKKGLYWRERGQLESTEFSFSRFLTPHLSDYQGWAMFVDCDFLYLADIKELTDLIDDKYAIMCVQHDYTPKETTKMDGAVQTVYPRKNWSSMVLYNCGHPKNKTLSPEIVNTQTGAFLHRFQWLEDEEIGSIPFVWNFLEGHNRVVEKDPTTQPKAVHYTRGGPWFDAWKDCEFADLWLNEMEEYNKENKKEADNAK.

Residues 236-259 (FADLWLNEMEEYNKENKKEADNAK) adopt a coiled-coil conformation.

Mostly expressed in pollen grains and pollen tubes, and, at low levels, in seedlings, roots, stems, leaves, flowers and siliques.

The protein resides in the cytoplasm. Its subcellular location is the cytosol. Probable nucleotide-diphospho-sugar transferase required for pollen germination and tube growth. The protein is Protein CDI of Arabidopsis thaliana (Mouse-ear cress).